The primary structure comprises 196 residues: Protein GrpE (196 aa).

Residues 1-41 are disordered; sequence MSSKEQKTPEGQAPEEIITEQHDDVEAVEPEVSAEQVDPRD.

Belongs to the GrpE family. As to quaternary structure, homodimer.

Its subcellular location is the cytoplasm. Functionally, participates actively in the response to hyperosmotic and heat shock by preventing the aggregation of stress-denatured proteins, in association with DnaK and GrpE. It is the nucleotide exchange factor for DnaK and may function as a thermosensor. Unfolded proteins bind initially to DnaJ; upon interaction with the DnaJ-bound protein, DnaK hydrolyzes its bound ATP, resulting in the formation of a stable complex. GrpE releases ADP from DnaK; ATP binding to DnaK triggers the release of the substrate protein, thus completing the reaction cycle. Several rounds of ATP-dependent interactions between DnaJ, DnaK and GrpE are required for fully efficient folding. The chain is Protein GrpE from Klebsiella pneumoniae subsp. pneumoniae (strain ATCC 700721 / MGH 78578).